A 181-amino-acid polypeptide reads, in one-letter code: MIEYLTNKFLNSKQTLLEKIVQIHDKKINITKLAKTLIEKSDCTKIDNTIGQKLLIKATYANDLDLVKALHDKGVKLGTKDLLGRTSLHHAIKAGAGKDLIEFLIDNAGIDINACDKSGSTLMHWAVNSHHIPAIKLLQTKKADYFTPDYLGQTPLKLAEYYGHDDVIELLAENSSAGYYV.

4 ANK repeats span residues 50-79 (IGQKLLIKATYANDLDLVKALHDKGVKLGT), 83-114 (LGRTSLHHAIKAGAGKDLIEFLIDNAGIDINA), 118-147 (SGSTLMHWAVNSHHIPAIKLLQTKKADYFT), and 151-180 (LGQTPLKLAEYYGHDDVIELLAENSSAGYY).

The sequence is that of Putative ankyrin repeat protein RBE_0150 from Rickettsia bellii (strain RML369-C).